A 160-amino-acid chain; its full sequence is Transcription elongation factor GreA (160 aa).

A coiled-coil region spans residues 3–84; the sequence is NIVDDKILLT…SKAKIIKADL (82 aa).

This sequence belongs to the GreA/GreB family.

Necessary for efficient RNA polymerase transcription elongation past template-encoded arresting sites. The arresting sites in DNA have the property of trapping a certain fraction of elongating RNA polymerases that pass through, resulting in locked ternary complexes. Cleavage of the nascent transcript by cleavage factors such as GreA or GreB allows the resumption of elongation from the new 3'terminus. GreA releases sequences of 2 to 3 nucleotides. This Mesomycoplasma hyopneumoniae (strain J / ATCC 25934 / NCTC 10110) (Mycoplasma hyopneumoniae) protein is Transcription elongation factor GreA.